The following is a 372-amino-acid chain: Queuine tRNA-ribosyltransferase (372 aa).

The active-site Proton acceptor is the Asp-92. Substrate-binding positions include 92–96, Asp-146, Gln-188, and Gly-215; that span reads DSGGF. Residues 246-252 are RNA binding; the sequence is GIGTLRE. Residue Asp-265 is the Nucleophile of the active site. Positions 270–274 are RNA binding; important for wobble base 34 recognition; it reads TRLGR. Positions 303, 305, 308, and 334 each coordinate Zn(2+).

Belongs to the queuine tRNA-ribosyltransferase family. Homodimer. Within each dimer, one monomer is responsible for RNA recognition and catalysis, while the other monomer binds to the replacement base PreQ1. Requires Zn(2+) as cofactor.

It catalyses the reaction 7-aminomethyl-7-carbaguanine + guanosine(34) in tRNA = 7-aminomethyl-7-carbaguanosine(34) in tRNA + guanine. It functions in the pathway tRNA modification; tRNA-queuosine biosynthesis. Catalyzes the base-exchange of a guanine (G) residue with the queuine precursor 7-aminomethyl-7-deazaguanine (PreQ1) at position 34 (anticodon wobble position) in tRNAs with GU(N) anticodons (tRNA-Asp, -Asn, -His and -Tyr). Catalysis occurs through a double-displacement mechanism. The nucleophile active site attacks the C1' of nucleotide 34 to detach the guanine base from the RNA, forming a covalent enzyme-RNA intermediate. The proton acceptor active site deprotonates the incoming PreQ1, allowing a nucleophilic attack on the C1' of the ribose to form the product. After dissociation, two additional enzymatic reactions on the tRNA convert PreQ1 to queuine (Q), resulting in the hypermodified nucleoside queuosine (7-(((4,5-cis-dihydroxy-2-cyclopenten-1-yl)amino)methyl)-7-deazaguanosine). This chain is Queuine tRNA-ribosyltransferase, found in Synechococcus sp. (strain CC9902).